The chain runs to 540 residues: MSGEGTDLPTFQSSRTADGDVINRPGSSQQQLVPIAHTISSPSKAYQKDTAMWSPPLSSHPIMSPPDLTPQHPVFSTEDLTRPAAGLRRRPSVPPPRRYSNGDYDPKLSFTSDTGRALRAREDLYYSDRERENSMSSRTRARDDHPHPDYHERSRPPRTYRNVVGWESGPQKSYFDDSSRSDLGKDRDLEKGMREAGAAPEWASGEKVRRKSTDESIDGYNYESHKRNGTKGTIDLNNLTPEERAMVLRLPWTQWMNSNFKNHFVATIGEFVGTTMFLFFAFAGTQVANIDSNTVNTTTGAATGFNIAVQLYIAVIFGFSLMVNVWIFFRISGGLFNPAVTLGMVLVGAIPIPRAACLFFAQILGGIAASGMVLGLFPTTFNVRTTLGASTSTVQGVFIEAILTAELVFTIFMLAKEKHKATFIAPVGIGLALFIAEMVGVYYTGGSLNPARSFGPCVVSGSFDKEHWIYWIGPITGTFIAVFFYKFIKMLEYEMANPGQDGDAKNDPTQNEKKREQILEERNRRYEKRNGSLRPGSRLS.

Residues 1–224 are disordered; that stretch reads MSGEGTDLPT…ESIDGYNYES (224 aa). The Cytoplasmic segment spans residues 1-263; that stretch reads MSGEGTDLPT…QWMNSNFKNH (263 aa). The segment covering 25-44 has biased composition (polar residues); it reads PGSSQQQLVPIAHTISSPSK. 4 stretches are compositionally biased toward basic and acidic residues: residues 119–133, 140–155, 174–194, and 204–214; these read RARE…EREN, RARD…ERSR, YFDD…KGMR, and SGEKVRRKSTD. A helical transmembrane segment spans residues 264–284; sequence FVATIGEFVGTTMFLFFAFAG. Over 285–308 the chain is Extracellular; that stretch reads TQVANIDSNTVNTTTGAATGFNIA. Asparagine 296 is a glycosylation site (N-linked (GlcNAc...) asparagine). A helical transmembrane segment spans residues 309 to 329; it reads VQLYIAVIFGFSLMVNVWIFF. The Cytoplasmic segment spans residues 330 to 332; the sequence is RIS. A helical transmembrane segment spans residues 333–353; it reads GGLFNPAVTLGMVLVGAIPIP. The Extracellular segment spans residues 354–356; the sequence is RAA. The chain crosses the membrane as a helical span at residues 357 to 377; the sequence is CLFFAQILGGIAASGMVLGLF. Residues 378–393 lie on the Cytoplasmic side of the membrane; it reads PTTFNVRTTLGASTST. A helical membrane pass occupies residues 394–414; sequence VQGVFIEAILTAELVFTIFML. The Extracellular segment spans residues 415–420; that stretch reads AKEKHK. Residues 421-441 traverse the membrane as a helical segment; the sequence is ATFIAPVGIGLALFIAEMVGV. At 442 to 467 the chain is on the cytoplasmic side; the sequence is YYTGGSLNPARSFGPCVVSGSFDKEH. Residues 468 to 488 form a helical membrane-spanning segment; sequence WIYWIGPITGTFIAVFFYKFI. At 489-540 the chain is on the extracellular side; sequence KMLEYEMANPGQDGDAKNDPTQNEKKREQILEERNRRYEKRNGSLRPGSRLS. The tract at residues 499 to 540 is disordered; that stretch reads GQDGDAKNDPTQNEKKREQILEERNRRYEKRNGSLRPGSRLS. The span at 502–530 shows a compositional bias: basic and acidic residues; the sequence is GDAKNDPTQNEKKREQILEERNRRYEKRN. Asparagine 530 is a glycosylation site (N-linked (GlcNAc...) asparagine).

The protein belongs to the MIP/aquaporin (TC 1.A.8) family.

It localises to the membrane. The catalysed reaction is H2O(in) = H2O(out). In terms of biological role, water channel required to facilitate the transport of water across membranes. May play a role in the vegetative growth. In Botryotinia fuckeliana (strain B05.10) (Noble rot fungus), this protein is Aquaporin-5.